Consider the following 567-residue polypeptide: Wee1-like protein kinase 2 (567 aa).

Basic and acidic residues-rich tracts occupy residues 1–12 and 26–36; these read MDDSSINKELKQ and EGQKEAPESRE. 2 disordered regions span residues 1–103 and 170–191; these read MDDS…DSRS and RSNG…EGKV. Ser-77 is modified (phosphoserine). The short motif at 174-176 is the Nuclear localization signal element; sequence KRK. One can recognise a Protein kinase domain in the interval 215–494; that stretch reads FLEVEKIGVG…ARSRVLRPSL (280 aa). Residues 221–229 and Lys-244 each bind ATP; that span reads IGVGEFGTV. The short motif at 318-332 is the Nuclear export signal element; sequence KLKDILLQISLGLKY. Catalysis depends on Asp-342, which acts as the Proton acceptor. 2 residues coordinate Mg(2+): Asn-347 and Asp-384. Residues 497 to 523 adopt a coiled-coil conformation; the sequence is AEELQQQLNLEKSKTATLERELREAQQ. The interval 502–567 is disordered; that stretch reads QQLNLEKSKT…SSFTCGKSSP (66 aa). Basic and acidic residues predominate over residues 507–520; it reads EKSKTATLERELRE. The span at 555-567 shows a compositional bias: polar residues; it reads AKSSSFTCGKSSP.

This sequence belongs to the protein kinase superfamily. Ser/Thr protein kinase family. WEE1 subfamily. In terms of processing, phosphorylation leads to increase its activity.

The protein localises to the nucleus. The enzyme catalyses L-tyrosyl-[protein] + ATP = O-phospho-L-tyrosyl-[protein] + ADP + H(+). Oocyte-specific protein tyrosine kinase that phosphorylates and inhibits CDK1 and acts as a key regulator of meiosis during both prophase I and metaphase II. Required to maintain meiotic arrest in oocytes during the germinal vesicle (GV) stage, a long period of quiescence at dictyate prophase I, by phosphorylating CDK1 at 'Tyr-15', leading to inhibit CDK1 activity and prevent meiotic reentry. Also required for metaphase II exit during egg activation by phosphorylating CDK1 at 'Tyr-15', to ensure exit from meiosis in oocytes and promote pronuclear formation. The sequence is that of Wee1-like protein kinase 2 (WEE2) from Canis lupus familiaris (Dog).